The primary structure comprises 548 residues: Alpha-1,3-mannosyl-glycoprotein 4-beta-N-acetylglucosaminyltransferase B (548 aa).

Residues 1 to 7 (MRLRNGT) are Cytoplasmic-facing. A helical; Signal-anchor for type II membrane protein membrane pass occupies residues 8–28 (FLTLLLFCLCAFLSLSWYAAL). The Lumenal portion of the chain corresponds to 29-548 (SGQKGDVVDI…LSEIFLKKAD (520 aa)). Residues 36 to 83 (VDIYQREFLALRDRLHAAEQESLKRSKELNLVLEEIKRAVSERQALRD) adopt a coiled-coil conformation. N-linked (GlcNAc...) asparagine glycosylation is found at Asn87 and Asn103.

Belongs to the glycosyltransferase 54 family. Interacts with SLC35A3. A divalent metal cation serves as cofactor. In terms of processing, N-glycosylated.

The protein resides in the golgi apparatus membrane. The enzyme catalyses N(4)-{beta-D-GlcNAc-(1-&gt;2)-alpha-D-Man-(1-&gt;3)-[beta-D-GlcNAc-(1-&gt;2)-alpha-D-Man-(1-&gt;6)]-beta-D-Man-(1-&gt;4)-beta-D-GlcNAc-(1-&gt;4)-beta-D-GlcNAc}-L-asparaginyl-[protein] + UDP-N-acetyl-alpha-D-glucosamine = N(4)-{beta-D-GlcNAc-(1-&gt;2)-[beta-D-GlcNAc-(1-&gt;4)]-alpha-D-Man-(1-&gt;3)-[beta-D-GlcNAc-(1-&gt;2)-alpha-D-Man-(1-&gt;6)]-beta-D-Man-(1-&gt;4)-beta-D-GlcNAc-(1-&gt;4)-beta-D-GlcNAc}-L-asparaginyl-[protein] + UDP + H(+). It catalyses the reaction an N(4)-{beta-D-GlcNAc-(1-&gt;2)-alpha-D-Man-(1-&gt;3)-[alpha-D-Man-(1-&gt;6)]-beta-D-Man-(1-&gt;4)-beta-D-GlcNAc-(1-&gt;4)-beta-D-GlcNAc}-L-asparaginyl-[protein] + UDP-N-acetyl-alpha-D-glucosamine = an N(4)-{beta-D-GlcNAc-(1-&gt;2)-[beta-D-GlcNAc-(1-&gt;4)]-alpha-D-Man-(1-&gt;3)-[alpha-D-Man-(1-&gt;6)]-beta-D-Man-(1-&gt;4)-beta-D-GlcNAc-(1-&gt;4)-beta-D-GlcNAc}-L-asparaginyl-[protein] + UDP + H(+). The catalysed reaction is an N(4)-{beta-D-GlcNAc-(1-&gt;2)-alpha-D-Man-(1-&gt;3)-[beta-D-GlcNAc-(1-&gt;2)-[beta-D-GlcNAc-(1-&gt;6)]-alpha-D-Man-(1-&gt;6)]-beta-D-Man-(1-&gt;4)-beta-D-GlcNAc-(1-&gt;4)-beta-D-GlcNAc}-L-asparaginyl-[protein] + UDP-N-acetyl-alpha-D-glucosamine = an N(4)-{beta-D-GlcNAc-(1-&gt;2)-[beta-D-GlcNAc-(1-&gt;4)]-alpha-D-Man-(1-&gt;3)-[beta-D-GlcNAc-(1-&gt;2)-[beta-D-GlcNAc-(1-&gt;6)]-alpha-D-Man-(1-&gt;6)]-beta-D-Man-(1-&gt;4)-beta-D-GlcNAc-(1-&gt;4)-beta-D-GlcNAc}-L-asparaginyl-[protein] + UDP + H(+). It carries out the reaction an N(4)-{beta-D-GlcNAc-(1-&gt;2)-alpha-D-Man-(1-&gt;3)-[beta-D-GlcNAc-(1-&gt;2)-alpha-D-Man-(1-&gt;6)]-beta-D-Man-(1-&gt;4)-beta-D-GlcNAc-(1-&gt;4)-[alpha-L-Fuc-(1-&gt;6)]-beta-D-GlcNAc}-L-asparaginyl-[protein] + UDP-N-acetyl-alpha-D-glucosamine = N(4)-{beta-D-GlcNAc-(1-&gt;2)-[beta-D-GlcNAc-(1-&gt;4)]-alpha-D-Man-(1-&gt;3)-[beta-D-GlcNAc-(1-&gt;2)-alpha-D-Man-(1-&gt;6)]-beta-D-Man-(1-&gt;4)-beta-D-GlcNAc-(1-&gt;4)-[alpha-L-Fuc-(1-&gt;6)]-beta-D-GlcNAc}-asparaginyl-[protein] + UDP + H(+). The enzyme catalyses an N(4)-{beta-D-GlcNAc-(1-&gt;2)-alpha-D-Man-(1-&gt;3)-[beta-D-Gal-(1-&gt;4)-beta-D-GlcNAc-(1-&gt;2)-alpha-D-Man-(1-&gt;6)]-beta-D-Man-(1-&gt;4)-beta-D-GlcNAc-(1-&gt;4)-beta-D-GlcNAc}-L-asparaginyl-[protein] + UDP-N-acetyl-alpha-D-glucosamine = an N(4)-{beta-D-GlcNAc-(1-&gt;2)-[beta-D-GlcNAc-(1-&gt;4)]-alpha-D-Man-(1-&gt;3)-[beta-D-Gal-(1-&gt;4)-beta-D-GlcNAc-(1-&gt;2)-alpha-D-Man-(1-&gt;6)]-beta-D-Man-(1-&gt;4)-beta-D-GlcNAc-(1-&gt;4)-beta-D-GlcNAc}-L-asparaginyl-[protein] + UDP + H(+). It catalyses the reaction N(4)-{beta-D-GlcNAc-(1-&gt;2)-alpha-D-Man-(1-&gt;3)-[alpha-D-Man-(1-&gt;3)-{alpha-D-Man-(1-&gt;6)}-alpha-D-Man-(1-&gt;6)]-beta-D-Man-(1-&gt;4)-beta-D-GlcNAc-(1-&gt;4)-beta-D-GlcNAc}-asparaginyl-[protein] + UDP-N-acetyl-alpha-D-glucosamine = N(4)-{beta-D-GlcNAc-(1-&gt;2)-[beta-D-GlcNAc-(1-&gt;4)]-alpha-D-Man-(1-&gt;3)-[alpha-D-Man-(1-&gt;3)-{alpha-D-Man-(1-&gt;6)}-alpha-D-Man-(1-&gt;6)]-beta-D-Man-(1-&gt;4)-beta-D-GlcNAc-(1-&gt;4)-beta-D-GlcNAc}-asparaginyl-[protein] + UDP + H(+). The catalysed reaction is N(4)-{beta-D-GlcNAc-(1-&gt;2)-alpha-D-Man-(1-&gt;3)-beta-D-Man-(1-&gt;4)-beta-D-GlcNAc-(1-&gt;4)-beta-D-GlcNAc}-asparaginyl-[protein] + UDP-N-acetyl-alpha-D-glucosamine = N(4)-{beta-D-GlcNAc-(1-&gt;2)-[beta-D-GlcNAc-(1-&gt;4)]-alpha-D-Man-(1-&gt;3)-beta-D-Man-(1-&gt;4)-beta-D-GlcNAc-(1-&gt;4)-beta-D-GlcNAc}-asparaginyl-[protein] + UDP + H(+). Its pathway is protein modification; protein glycosylation. Functionally, glycosyltransferase that catalyzes the transfer of GlcNAc from UDP-GlcNAc to the GlcNAcbeta1-2Manalpha1-3 arm of the core structure of N-linked glycans through a beta1-4 linkage and participates in the production of tri- and tetra-antennary N-linked sugar chains. Prefers complex-type N-glycans over hybrid-types. Has lower affinities for donors or acceptors than MGAT4A, suggesting that, under physiological conditions, it is not the main contributor in N-glycan biosynthesis. The sequence is that of Alpha-1,3-mannosyl-glycoprotein 4-beta-N-acetylglucosaminyltransferase B from Mus musculus (Mouse).